The following is a 345-amino-acid chain: Carbamoyl phosphate synthase small chain (345 aa).

The tract at residues 1–169 (MKKYLVMEDG…FVKGEEGGTV (169 aa)) is CPSase. 3 residues coordinate L-glutamine: Ser45, Gly213, and Gly215. One can recognise a Glutamine amidotransferase type-1 domain in the interval 168–345 (TVLFIDLGSK…GEMKRRIGYA (178 aa)). The active-site Nucleophile is Cys242. 5 residues coordinate L-glutamine: Phe243, Gln246, Asn282, Gly284, and Tyr285. Active-site residues include His321 and Glu323.

This sequence belongs to the CarA family. Composed of two chains; the small (or glutamine) chain promotes the hydrolysis of glutamine to ammonia, which is used by the large (or ammonia) chain to synthesize carbamoyl phosphate. Tetramer of heterodimers (alpha,beta)4.

The catalysed reaction is hydrogencarbonate + L-glutamine + 2 ATP + H2O = carbamoyl phosphate + L-glutamate + 2 ADP + phosphate + 2 H(+). It catalyses the reaction L-glutamine + H2O = L-glutamate + NH4(+). Its pathway is amino-acid biosynthesis; L-arginine biosynthesis; carbamoyl phosphate from bicarbonate: step 1/1. The protein operates within pyrimidine metabolism; UMP biosynthesis via de novo pathway; (S)-dihydroorotate from bicarbonate: step 1/3. Small subunit of the glutamine-dependent carbamoyl phosphate synthetase (CPSase). CPSase catalyzes the formation of carbamoyl phosphate from the ammonia moiety of glutamine, carbonate, and phosphate donated by ATP, constituting the first step of 2 biosynthetic pathways, one leading to arginine and/or urea and the other to pyrimidine nucleotides. The small subunit (glutamine amidotransferase) binds and cleaves glutamine to supply the large subunit with the substrate ammonia. The chain is Carbamoyl phosphate synthase small chain from Thermoplasma volcanium (strain ATCC 51530 / DSM 4299 / JCM 9571 / NBRC 15438 / GSS1).